Here is a 102-residue protein sequence, read N- to C-terminus: Small ribosomal subunit protein uS10c (102 aa).

This sequence belongs to the universal ribosomal protein uS10 family. In terms of assembly, part of the 30S ribosomal subunit.

The protein localises to the plastid. Its subcellular location is the chloroplast. Functionally, involved in the binding of tRNA to the ribosomes. The protein is Small ribosomal subunit protein uS10c of Guillardia theta (Cryptophyte).